The sequence spans 249 residues: 5-oxoprolinase subunit A (249 aa).

It belongs to the LamB/PxpA family. In terms of assembly, forms a complex composed of PxpA, PxpB and PxpC.

It catalyses the reaction 5-oxo-L-proline + ATP + 2 H2O = L-glutamate + ADP + phosphate + H(+). Its function is as follows. Catalyzes the cleavage of 5-oxoproline to form L-glutamate coupled to the hydrolysis of ATP to ADP and inorganic phosphate. This is 5-oxoprolinase subunit A from Limosilactobacillus fermentum (strain NBRC 3956 / LMG 18251) (Lactobacillus fermentum).